The primary structure comprises 341 residues: Mitochondrial dimethyladenosine transferase 1 (341 aa).

A mitochondrion-targeting transit peptide spans 1–27 (MASSRTLGTFRLPPLPTIREIIKLFRL). Residues leucine 38, glycine 63, glutamate 85, lysine 86, aspartate 111, valine 112, and asparagine 141 each contribute to the S-adenosyl-L-methionine site.

This sequence belongs to the class I-like SAM-binding methyltransferase superfamily. rRNA adenine N(6)-methyltransferase family. KsgA subfamily. In terms of assembly, interacts with mitochondrial RNA polymerase POLRMT. Interacts with TFAM. Bound to the maturing mtSSU until the late stages of assembly.

It localises to the mitochondrion. The catalysed reaction is adenosine(N)/adenosine(N+1) in rRNA + 4 S-adenosyl-L-methionine = N(6)-dimethyladenosine(N)/N(6)-dimethyladenosine(N+1) in rRNA + 4 S-adenosyl-L-homocysteine + 4 H(+). Mitochondrial methyltransferase which uses S-adenosyl methionine to dimethylate two highly conserved adjacent adenosine residues (A1583 and A1584) within the loop of helix 45 at the 3-prime end of 12S rRNA, thereby regulating the assembly or stability of the small subunit of the mitochondrial ribosome. Also required for basal transcription of mitochondrial DNA, probably via its interaction with POLRMT and TFAM. Stimulates transcription independently of the methyltransferase activity. In Bos taurus (Bovine), this protein is Mitochondrial dimethyladenosine transferase 1 (TFB1M).